Consider the following 1224-residue polypeptide: MKVKKNLTCSVSTSSRTMSLLSQLEKINLDSVLGEADNARYVTAKILHLVQSQEKTKKEMTSKGSSAIEVILSTLENTRDPQTILNILSILIELVSVGGGRRASVLVTKGGTQILLQLLLNASKESPPNEELMVLLHTLLAKIGPKDKKIGMKARINGALNISLNLVKQNLQNHRLILPCLQVLRVYSTNSVNAVSLGKNGVVELMFKIIGPFSKKNTSLMKVALDTLAALLKSKTNARRAVDRGYVHMLLTIYVDWHRHDSRHRYMLIRKGVLQCIKSVTNIKLGRKAFIDANGMKILYNTSQECLAVRTLDPLVNTSSLIMRKCFPKNRLPLPTIKSAFHFQLPVIPASGPVAQMYNLPPDVDDVVDESDDNDDAETESEIETEDDKDQNFKNDDIETDINKLKPRQELGRPLEELKMYEQFFPELTENFQECDLVSKEPKPFVSNANLGGPIVVPTAGEEFSAETNPSVIGISLKEGNPLLTEEYNRRPAFLGLPKKDSIKASSLLQQNVQRNLLPSCQCLSQEIVTGLDRISLQNTSENDQYYATGCVIKKDNKTSLTPLACSKTCEHVSPCGSSLFEGSSVHLGKFCCTGVESEEEDSKSSSSGEQVVLEVSDVSPVHDCDLYIEMVKTTKSIPEYSEVAYPDYFGHIPPPFKEPILERPYGVQRTKISQDIERLIHQNDIIDRVVYDLDNSICSAPEEVDVLKFNSKFESGNLRKVIQIRKNEYDLILNSDINSNHYHQWFYFEVSGMKTGIGYRFNIINCEKSNSQFNYGMQPLMYSVQEALNSRPSWTRVGTDICYYKNHFSRSSIAAGGQKGKSYYTITFTVTFQHKDDVCYFAYHYPYTYSTLKMHLQKLESMHNPQQIYFRQDALCETLGGNICPIVTITAMPESNYYEHICQFRNRPYIFLSARVHPGETNASWVMKGTLEYLMSSNPSAQSLRESYIFKIIPMLNPDGVINGNHRCSLSGEDLNRQWQNPNPDLHPTIYHAKGLLQYLAAIKRLPLVYCDYHGHSRKKNVFMYGCSIKETMWHTNVNTASCDLMEDPGYRVLPKILSQTAPAFCMGSCSFVVEKSKESTARVVVWREIGVQRSYTMESTLCGCDQGKYKGLQIGTKELEEMGAKFCVGLLRLKRMASPLEYNLPSGLLDIENELIESSCKVTSPTTYVLDEDEPRFLEEVDYSAESNDDQDAELADNVGDYEANNQEDGLSDSDSTRILLS.

The disordered stretch occupies residues 361–398; the sequence is PPDVDDVVDESDDNDDAETESEIETEDDKDQNFKNDDI. Over residues 363–389 the composition is skewed to acidic residues; the sequence is DVDDVVDESDDNDDAETESEIETEDDK. The Peptidase M14 domain occupies 846 to 1136; sequence YPYTYSTLKM…KFCVGLLRLK (291 aa). Positions 918, 921, and 1015 each coordinate Zn(2+). E1100 (proton donor/acceptor) is an active-site residue. The segment covering 1186–1197 has biased composition (acidic residues); the sequence is SAESNDDQDAEL. A disordered region spans residues 1186-1224; sequence SAESNDDQDAELADNVGDYEANNQEDGLSDSDSTRILLS. Over residues 1206 to 1224 the composition is skewed to polar residues; sequence ANNQEDGLSDSDSTRILLS.

Belongs to the peptidase M14 family. Zn(2+) serves as cofactor.

The protein resides in the cytoplasm. The protein localises to the cytosol. It is found in the nucleus. It localises to the mitochondrion. The enzyme catalyses (L-glutamyl)(n+1)-gamma-L-glutamyl-L-glutamyl-[protein] + H2O = (L-glutamyl)(n)-gamma-L-glutamyl-L-glutamyl-[protein] + L-glutamate. It catalyses the reaction C-terminal L-alpha-aminoacyl-L-glutamyl-L-glutamyl-[tubulin] + H2O = C-terminal L-alpha-aminoacyl-L-glutamyl-[tubulin] + L-glutamate. Its function is as follows. Metallocarboxypeptidase that mediates protein deglutamylation of tubulin and non-tubulin target proteins. Catalyzes the removal of polyglutamate side chains present on the gamma-carboxyl group of glutamate residues within the C-terminal tail of alpha- and beta-tubulin. Specifically cleaves tubulin long-side-chains, while it is not able to remove the branching point glutamate. Also catalyzes the removal of polyglutamate residues from the carboxy-terminus of alpha-tubulin as well as non-tubulin proteins. The polypeptide is Cytosolic carboxypeptidase 1 (AGTPBP1) (Gallus gallus (Chicken)).